Here is a 799-residue protein sequence, read N- to C-terminus: MKLSVDWLNEFTPLSQIPFEKVLEKINTSICEIDDVEEFKSHLSSVITVKIKSLEKHPNAEKLQTTIATDGSKEYQIVTAATNVAVGDIVPLALPGTKLDGKEILDSELRGVRSQGMYCSEKELGMALESSGVLILPKDTTLGISVRKYFLWEDTILTIDNKSITHRPDLWNHFGFARELASQLQIPLHHFPLQADTKWESGNQGLTVEKSEHAHAYYVCSIQNVNITESIPKIKSRLEKCGIRSINNVVDVSNYLLLELGQPTHFFDRSKLQSTSFTVSKSKEGESISLLDDTSPTLPNHILLIQNGETPVALAGVMGGKDSAVSESTKEIVMESAVFKREDVRYTIRKTNIRTESAVRYEKGLDSYTCLPVMKRAVQLLKENGNPNVKVFEPQGFNHTESKTVTIETNLSFLRHKLGKKISLHEVTDILQRLGFEVTTKDESLSVLVPKYRQNYDVTIPEDLVEEIGRTIGYASIRTEALSMAVETPIRNPLRELERRVKQFLALEVGFNEVYNYSFASPTDAKLEKEFEVTSLKIANEMPEEHSLLRNSLYPGLIKQTKVNQDRFEKVNLFELGRTYHKEGNDATLAQEKRWISLLSLSKCKPTDLSSIEDEFLTVRETISELFLFLNLPKFEWVKLPRTHFHPNASLVLLYDGKEVVELGILHTRFADLYDLKRRAILSKIDMEVLVQIWETYGRNSHFVPPSHFPQGQLDLSLIMNESDPTESFANLVKTLRIPELESVFVQTIFQGESVGEGKKSVTYRFILMSYDKTFTQDRFKELSDRLVETAKSNGYSLR.

Residues 40–147 (KSHLSSVITV…KDTTLGISVR (108 aa)) form the tRNA-binding domain. In terms of domain architecture, B5 spans 402–479 (SKTVTIETNL…RTIGYASIRT (78 aa)). Residues aspartate 457, aspartate 463, glutamate 466, and glutamate 467 each coordinate Mg(2+). Positions 707-799 (SHFPQGQLDL…TAKSNGYSLR (93 aa)) constitute an FDX-ACB domain.

The protein belongs to the phenylalanyl-tRNA synthetase beta subunit family. Type 1 subfamily. Tetramer of two alpha and two beta subunits. The cofactor is Mg(2+).

Its subcellular location is the cytoplasm. The catalysed reaction is tRNA(Phe) + L-phenylalanine + ATP = L-phenylalanyl-tRNA(Phe) + AMP + diphosphate + H(+). The protein is Phenylalanine--tRNA ligase beta subunit of Leptospira biflexa serovar Patoc (strain Patoc 1 / Ames).